Reading from the N-terminus, the 160-residue chain is Major pollen allergen Bet v 1-A (160 aa).

Residues Lys-55, Tyr-82, Tyr-84, and Asn-101 each coordinate brassinolide.

It belongs to the BetVI family.

It is found in the cytoplasm. Functionally, may be a general steroid carrier protein. This Betula pendula (European white birch) protein is Major pollen allergen Bet v 1-A (BETVIA).